The primary structure comprises 419 residues: Gustatory receptor for bitter taste 93a (419 aa).

Over 1 to 55 (MFSSSSAMTGKRAESWSRLLLLWLYRCARGLLVLSSSLDRDKLQLKATKQGSRNR) the chain is Cytoplasmic. Residues 56–76 (FLHILWRCIVVMIYAGLWPML) form a helical membrane-spanning segment. The Extracellular portion of the chain corresponds to 77–90 (TSAVIGKRLESYAD). Residues 91-111 (VLALAQSMSVSILAVISFVIQ) form a helical membrane-spanning segment. The Cytoplasmic portion of the chain corresponds to 112–145 (ARGENQFREVLNRYLALYQRICLTTRLRHLFPTK). The chain crosses the membrane as a helical span at residues 146–166 (FVVFFLLKLFFTLCGCFHEII). The Extracellular segment spans residues 167-184 (PLFENSHFDDISQMVGTG). The chain crosses the membrane as a helical span at residues 185–205 (FGIYMWLGTLCVLDACFLGFL). The Cytoplasmic portion of the chain corresponds to 206-277 (VSGILYEHMA…NSFRRILQWQ (72 aa)). The helical transmembrane segment at 278-298 (ILFYIYLNFINICLMLYQYIL) threads the bilayer. The Extracellular portion of the chain corresponds to 299–305 (HFLNDDE). A helical transmembrane segment spans residues 306-326 (VVFVSIVMAFVKLANLVLLMM). Over 327 to 383 (CADYTVRQSEVPKKLPLDIVCSDMDERWDKSVETFLGQLQTQRLEIKVLGFFHLNNE) the chain is Cytoplasmic. The chain crosses the membrane as a helical span at residues 384–404 (FILLILSAIISYLFILIQFGI). The Extracellular segment spans residues 405-419 (TGGFEASEDIKNRFD).

Belongs to the insect chemoreceptor superfamily. Gustatory receptor (GR) family. Gr93a subfamily. As to expression, in larvae, is expressed in neurons of the dorsal pharyngeal sense organs.

It localises to the cell membrane. Its function is as follows. Gustatory receptor required for response to the bitter in taste neurons. Gr93a cells respond to bitter compounds such as caffeine. Flies avoid bitter substances, suggesting that Gr93a neuron activity is sufficient to mediate avoidance behavior. The chain is Gustatory receptor for bitter taste 93a (Gr93a) from Drosophila melanogaster (Fruit fly).